The sequence spans 506 residues: Histidine ammonia-lyase (506 aa).

A cross-link (5-imidazolinone (Ala-Gly)) is located at residues 143-145 (ASG). The residue at position 144 (serine 144) is a 2,3-didehydroalanine (Ser).

It belongs to the PAL/histidase family. Post-translationally, contains an active site 4-methylidene-imidazol-5-one (MIO), which is formed autocatalytically by cyclization and dehydration of residues Ala-Ser-Gly.

Its subcellular location is the cytoplasm. It catalyses the reaction L-histidine = trans-urocanate + NH4(+). The protein operates within amino-acid degradation; L-histidine degradation into L-glutamate; N-formimidoyl-L-glutamate from L-histidine: step 1/3. The chain is Histidine ammonia-lyase from Salmonella typhimurium (strain LT2 / SGSC1412 / ATCC 700720).